A 139-amino-acid polypeptide reads, in one-letter code: Large ribosomal subunit protein uL16 (139 aa).

Belongs to the universal ribosomal protein uL16 family. In terms of assembly, part of the 50S ribosomal subunit.

Its function is as follows. Binds 23S rRNA and is also seen to make contacts with the A and possibly P site tRNAs. This Koribacter versatilis (strain Ellin345) protein is Large ribosomal subunit protein uL16.